Here is a 488-residue protein sequence, read N- to C-terminus: Multidrug resistance outer membrane protein MdtP (488 aa).

The signal sequence occupies residues 1–23 (MINRQLSRLLLCSILGSTTLISG). A lipid anchor (N-palmitoyl cysteine) is attached at cysteine 24. A lipid anchor (S-diacylglycerol cysteine) is attached at cysteine 24.

The protein belongs to the outer membrane factor (OMF) (TC 1.B.17) family. As to quaternary structure, could be part of a tripartite efflux system composed of MdtN, MdtO and MdtP.

It localises to the cell outer membrane. Functionally, could be involved in resistance to puromycin, acriflavine and tetraphenylarsonium chloride. This is Multidrug resistance outer membrane protein MdtP (mdtP) from Escherichia coli O6:H1 (strain CFT073 / ATCC 700928 / UPEC).